We begin with the raw amino-acid sequence, 364 residues long: Ribosomal RNA small subunit methyltransferase H (364 aa).

S-adenosyl-L-methionine-binding positions include 55–57, Asp-75, Phe-101, Asp-122, and Gln-129; that span reads GGH. Residues 333–364 form a disordered region; sequence LPPGGGAGFVKAGRVPGEPVRGTRAGSKGRRR.

This sequence belongs to the methyltransferase superfamily. RsmH family.

It is found in the cytoplasm. The enzyme catalyses cytidine(1402) in 16S rRNA + S-adenosyl-L-methionine = N(4)-methylcytidine(1402) in 16S rRNA + S-adenosyl-L-homocysteine + H(+). Functionally, specifically methylates the N4 position of cytidine in position 1402 (C1402) of 16S rRNA. The chain is Ribosomal RNA small subunit methyltransferase H from Bordetella bronchiseptica (strain ATCC BAA-588 / NCTC 13252 / RB50) (Alcaligenes bronchisepticus).